The chain runs to 527 residues: Palmitoleoyl-protein carboxylesterase NOTUM (527 aa).

Residues 1 to 19 (MKSYLILNTLLLSLLKING) form the signal peptide. N-linked (GlcNAc...) asparagine glycans are attached at residues Asn-64, Asn-86, and Asn-104. Ser-203 functions as the Charge relay system in the catalytic mechanism. Residue Asn-249 is glycosylated (N-linked (GlcNAc...) asparagine). Catalysis depends on charge relay system residues Asp-311 and His-359. N-linked (GlcNAc...) asparagine glycosylation occurs at Asn-451.

The protein belongs to the pectinacetylesterase family. Notum subfamily. In terms of tissue distribution, expressed in the anterior pole.

It is found in the secreted. It catalyses the reaction [Wnt protein]-O-(9Z)-hexadecenoyl-L-serine + H2O = [Wnt protein]-L-serine + (9Z)-hexadecenoate + H(+). In terms of biological role, carboxylesterase that acts as a key negative regulator of the Wnt signaling pathway. Acts by specifically mediating depalmitoleoylation of WNT proteins. Serine palmitoleoylation of WNT proteins is required for efficient binding to frizzled receptors. Promotes head regeneration following amputation by inhibiting the Wnt signaling pathway. The protein is Palmitoleoyl-protein carboxylesterase NOTUM of Schmidtea mediterranea (Freshwater planarian flatworm).